We begin with the raw amino-acid sequence, 455 residues long: UDP-N-acetylmuramoylalanine--D-glutamate ligase (455 aa).

117 to 123 (GTNGKTT) provides a ligand contact to ATP.

This sequence belongs to the MurCDEF family.

The protein resides in the cytoplasm. It catalyses the reaction UDP-N-acetyl-alpha-D-muramoyl-L-alanine + D-glutamate + ATP = UDP-N-acetyl-alpha-D-muramoyl-L-alanyl-D-glutamate + ADP + phosphate + H(+). It functions in the pathway cell wall biogenesis; peptidoglycan biosynthesis. In terms of biological role, cell wall formation. Catalyzes the addition of glutamate to the nucleotide precursor UDP-N-acetylmuramoyl-L-alanine (UMA). In Pelotomaculum thermopropionicum (strain DSM 13744 / JCM 10971 / SI), this protein is UDP-N-acetylmuramoylalanine--D-glutamate ligase.